The following is a 409-amino-acid chain: Serine/threonine transporter SstT (409 aa).

9 helical membrane passes run 24–44 (LALGIVIGSVSPQLGLAAGLF), 48–68 (FVGALKAVAPVLVFILVAATI), 82–102 (IIVLYLIGTFSAALTAVIAGM), 142–162 (AIANANYIGILAWALVLGAAL), 194–214 (LGIFGLVSSTIAETGFGALAG), 218–238 (LLAVLLGCMAFIALAVNPAIV), 292–312 (IPLGATVNMGGAAITITVLAM), 319–339 (GIQVDFATALLLSLVATVSAC), and 365–385 (VAMQVVAVGFIIGVIQDSAET).

Belongs to the dicarboxylate/amino acid:cation symporter (DAACS) (TC 2.A.23) family.

The protein resides in the cell inner membrane. The enzyme catalyses L-serine(in) + Na(+)(in) = L-serine(out) + Na(+)(out). It catalyses the reaction L-threonine(in) + Na(+)(in) = L-threonine(out) + Na(+)(out). Its function is as follows. Involved in the import of serine and threonine into the cell, with the concomitant import of sodium (symport system). The polypeptide is Serine/threonine transporter SstT (Neisseria gonorrhoeae (strain NCCP11945)).